Reading from the N-terminus, the 212-residue chain is N-acetyltransferase 9-like protein (212 aa).

The 168-residue stretch at 34 to 201 (EEIREQTASE…INLLNLKNND (168 aa)) folds into the N-acetyltransferase domain.

It belongs to the acetyltransferase family. GNAT subfamily.

The sequence is that of N-acetyltransferase 9-like protein (nat9) from Dictyostelium discoideum (Social amoeba).